The primary structure comprises 263 residues: Ribonuclease HII (263 aa).

An RNase H type-2 domain is found at 71-262; sequence QAIAGIDEVG…VKSMCCNSTN (192 aa). A divalent metal cation is bound by residues D77, E78, and D172.

This sequence belongs to the RNase HII family. It depends on Mn(2+) as a cofactor. Mg(2+) serves as cofactor.

Its subcellular location is the cytoplasm. The catalysed reaction is Endonucleolytic cleavage to 5'-phosphomonoester.. Endonuclease that specifically degrades the RNA of RNA-DNA hybrids. The sequence is that of Ribonuclease HII from Streptococcus pyogenes serotype M2 (strain MGAS10270).